Consider the following 167-residue polypeptide: T-cell surface glycoprotein CD3 delta chain (167 aa).

The N-terminal stretch at 1–21 is a signal peptide; it reads MEHSRCLSCLILAALLSQVNP. At 22-100 the chain is on the extracellular side; sequence RALEVLEAED…NCVELDSATL (79 aa). A disulfide bridge connects residues Cys37 and Cys73. N-linked (GlcNAc...) asparagine glycans are attached at residues Asn38 and Asn55. A helical membrane pass occupies residues 101–121; that stretch reads AGLIITDIIATVLLALGVYCF. The Cytoplasmic portion of the chain corresponds to 122 to 167; the sequence is AGHETGRFSRAADTQVLMGNDQLYQPLRERNDAQYSRLGDKWARNK. Positions 134-162 constitute an ITAM domain; the sequence is DTQVLMGNDQLYQPLRERNDAQYSRLGDK. A phosphotyrosine mark is found at Tyr145 and Tyr156.

As to quaternary structure, the TCR-CD3 complex is composed of a CD3D/CD3E and a CD3G/CD3E heterodimers that preferentially associate with TCRalpha and TCRbeta, respectively, to form TCRalpha/CD3E/CD3G and TCRbeta/CD3G/CD3E trimers. In turn, the hexamer interacts with CD3Z homodimer to form the TCR-CD3 complex. Alternatively, TCRalpha and TCRbeta can be replaced by TCRgamma and TCRdelta. Interacts with coreceptors CD4 and CD8. Phosphorylated on Tyr residues after T-cell receptor triggering by LCK in association with CD4/CD8. CD3D is mostly present on T-lymphocytes with its TCR-CD3 partners. Present also in fetal NK-cells.

It localises to the cell membrane. In terms of biological role, part of the TCR-CD3 complex present on T-lymphocyte cell surface that plays an essential role in adaptive immune response. When antigen presenting cells (APCs) activate T-cell receptor (TCR), TCR-mediated signals are transmitted across the cell membrane by the CD3 chains CD3D, CD3E, CD3G and CD3Z. All CD3 chains contain immunoreceptor tyrosine-based activation motifs (ITAMs) in their cytoplasmic domain. Upon TCR engagement, these motifs become phosphorylated by Src family protein tyrosine kinases LCK and FYN, resulting in the activation of downstream signaling pathways. In addition of this role of signal transduction in T-cell activation, CD3D plays an essential role in thymocyte differentiation. Indeed, participates in correct intracellular TCR-CD3 complex assembly and surface expression. In absence of a functional TCR-CD3 complex, thymocytes are unable to differentiate properly. Interacts with CD4 and CD8 and thus serves to establish a functional link between the TCR and coreceptors CD4 and CD8, which is needed for activation and positive selection of CD4 or CD8 T-cells. The polypeptide is T-cell surface glycoprotein CD3 delta chain (CD3D) (Ovis aries (Sheep)).